A 319-amino-acid chain; its full sequence is Beta-ketoacyl-[acyl-carrier-protein] synthase III (319 aa).

Catalysis depends on residues C113 and H246. An ACP-binding region spans residues 247–251; sequence QANIR. N276 is an active-site residue.

It belongs to the thiolase-like superfamily. FabH family. As to quaternary structure, homodimer.

It localises to the cytoplasm. It catalyses the reaction malonyl-[ACP] + acetyl-CoA + H(+) = 3-oxobutanoyl-[ACP] + CO2 + CoA. It functions in the pathway lipid metabolism; fatty acid biosynthesis. Functionally, catalyzes the condensation reaction of fatty acid synthesis by the addition to an acyl acceptor of two carbons from malonyl-ACP. Catalyzes the first condensation reaction which initiates fatty acid synthesis and may therefore play a role in governing the total rate of fatty acid production. Possesses both acetoacetyl-ACP synthase and acetyl transacylase activities. Its substrate specificity determines the biosynthesis of branched-chain and/or straight-chain of fatty acids. This is Beta-ketoacyl-[acyl-carrier-protein] synthase III from Ehrlichia chaffeensis (strain ATCC CRL-10679 / Arkansas).